The following is a 263-amino-acid chain: Hydroxyethylthiazole kinase 1 (263 aa).

M42 is a binding site for substrate. ATP contacts are provided by K118 and T164. Position 191 (G191) interacts with substrate.

The protein belongs to the Thz kinase family. It depends on Mg(2+) as a cofactor.

The enzyme catalyses 5-(2-hydroxyethyl)-4-methylthiazole + ATP = 4-methyl-5-(2-phosphooxyethyl)-thiazole + ADP + H(+). The protein operates within cofactor biosynthesis; thiamine diphosphate biosynthesis; 4-methyl-5-(2-phosphoethyl)-thiazole from 5-(2-hydroxyethyl)-4-methylthiazole: step 1/1. Functionally, catalyzes the phosphorylation of the hydroxyl group of 4-methyl-5-beta-hydroxyethylthiazole (THZ). The chain is Hydroxyethylthiazole kinase 1 from Clostridium botulinum (strain Langeland / NCTC 10281 / Type F).